The chain runs to 522 residues: Chromosomal replication initiator protein DnaA (522 aa).

Residues 1–71 (MQDFWHAASA…QSLACDYWEM (71 aa)) are domain I, interacts with DnaA modulators. The interval 71–185 (MQVDVQFVLD…PVDDTVHERS (115 aa)) is domain II. Residues 186–402 (RLNPILTFDN…GALRKILAYS (217 aa)) are domain III, AAA+ region. ATP is bound by residues G230, G232, K233, and T234. Positions 403–522 (NFHGKEITIE…LHVLEQTLKG (120 aa)) are domain IV, binds dsDNA.

It belongs to the DnaA family. In terms of assembly, oligomerizes as a right-handed, spiral filament on DNA at oriC.

Its subcellular location is the cytoplasm. Its function is as follows. Plays an essential role in the initiation and regulation of chromosomal replication. ATP-DnaA binds to the origin of replication (oriC) to initiate formation of the DNA replication initiation complex once per cell cycle. Binds the DnaA box (a 9 base pair repeat at the origin) and separates the double-stranded (ds)DNA. Forms a right-handed helical filament on oriC DNA; dsDNA binds to the exterior of the filament while single-stranded (ss)DNA is stabiized in the filament's interior. The ATP-DnaA-oriC complex binds and stabilizes one strand of the AT-rich DNA unwinding element (DUE), permitting loading of DNA polymerase. After initiation quickly degrades to an ADP-DnaA complex that is not apt for DNA replication. Binds acidic phospholipids. The protein is Chromosomal replication initiator protein DnaA of Ralstonia nicotianae (strain ATCC BAA-1114 / GMI1000) (Ralstonia solanacearum).